The chain runs to 98 residues: Small ribosomal subunit protein uS19 (98 aa).

The disordered stretch occupies residues phenylalanine 74–lysine 98.

This sequence belongs to the universal ribosomal protein uS19 family.

In terms of biological role, protein S19 forms a complex with S13 that binds strongly to the 16S ribosomal RNA. In Chlorobium chlorochromatii (strain CaD3), this protein is Small ribosomal subunit protein uS19.